We begin with the raw amino-acid sequence, 279 residues long: Phosphatidylglycerol--prolipoprotein diacylglyceryl transferase (279 aa).

3 helical membrane passes run 18–38, 55–75, and 89–109; these read LSVR…YFVA, IIFY…VIFQ, and IWHG…AGVI. Arg137 serves as a coordination point for a 1,2-diacyl-sn-glycero-3-phospho-(1'-sn-glycerol). 2 consecutive transmembrane segments (helical) span residues 203–223 and 235–255; these read LGET…FIEG and IRVA…LIVY.

It belongs to the Lgt family.

It localises to the cell membrane. The enzyme catalyses L-cysteinyl-[prolipoprotein] + a 1,2-diacyl-sn-glycero-3-phospho-(1'-sn-glycerol) = an S-1,2-diacyl-sn-glyceryl-L-cysteinyl-[prolipoprotein] + sn-glycerol 1-phosphate + H(+). It functions in the pathway protein modification; lipoprotein biosynthesis (diacylglyceryl transfer). In terms of biological role, catalyzes the transfer of the diacylglyceryl group from phosphatidylglycerol to the sulfhydryl group of the N-terminal cysteine of a prolipoprotein, the first step in the formation of mature lipoproteins. This chain is Phosphatidylglycerol--prolipoprotein diacylglyceryl transferase, found in Staphylococcus aureus (strain Mu3 / ATCC 700698).